Here is a 465-residue protein sequence, read N- to C-terminus: MEHPWIPNSHKAILDEMLEAIGVSSVDDLYRDIPPTILLSPEEWDSLPIGEGRPLSEAEVLARINDILSRNKYFTDPPPFVGGGVWPRYVPSVVKALITRGEFLTAYTPYQAEISQGLMQALFEYQSLVAELLEMEVVNASLYDWSSAVGEAMLMARRVTRRNRVLVPETMNPLHLETATTYAYGGGIRVEKVRVDRETGFIDLEDLESRLSQGDTAALYMEYPSSYTGVIDENVEAAGEAVHKAGGLFILGVEPVSMAILKPPGRLGADIAVGDGQPLGLGLNYGGPYLGVFAVRWDGRLVRQMPGRLIGMTVDAEGRRAFAMILQTREQHIRRAKATSNITTNEALMAIAAAVYLSLLGPQGLREVAEASWYMSHYAAKRLSELRGVEAPLLEGEFIMDFTVRLPMDAGVARRRLLEKGVLAGIPLGGFSFFSDNDMLLTVTEAHTRRHVDLLVNLLDSVLGG.

Belongs to the GcvP family. N-terminal subunit subfamily. The glycine cleavage system is composed of four proteins: P, T, L and H. In this organism, the P 'protein' is a heterodimer of two subunits.

The catalysed reaction is N(6)-[(R)-lipoyl]-L-lysyl-[glycine-cleavage complex H protein] + glycine + H(+) = N(6)-[(R)-S(8)-aminomethyldihydrolipoyl]-L-lysyl-[glycine-cleavage complex H protein] + CO2. Functionally, the glycine cleavage system catalyzes the degradation of glycine. The P protein binds the alpha-amino group of glycine through its pyridoxal phosphate cofactor; CO(2) is released and the remaining methylamine moiety is then transferred to the lipoamide cofactor of the H protein. The sequence is that of Probable glycine dehydrogenase (decarboxylating) subunit 1 from Aeropyrum pernix (strain ATCC 700893 / DSM 11879 / JCM 9820 / NBRC 100138 / K1).